Consider the following 141-residue polypeptide: Large ribosomal subunit protein uL11 (141 aa).

This sequence belongs to the universal ribosomal protein uL11 family. Part of the ribosomal stalk of the 50S ribosomal subunit. Interacts with L10 and the large rRNA to form the base of the stalk. L10 forms an elongated spine to which L12 dimers bind in a sequential fashion forming a multimeric L10(L12)X complex. One or more lysine residues are methylated.

Its function is as follows. Forms part of the ribosomal stalk which helps the ribosome interact with GTP-bound translation factors. The chain is Large ribosomal subunit protein uL11 from Sulfurimonas denitrificans (strain ATCC 33889 / DSM 1251) (Thiomicrospira denitrificans (strain ATCC 33889 / DSM 1251)).